Here is a 596-residue protein sequence, read N- to C-terminus: Phosphoenolpyruvate carboxykinase [GTP] (596 aa).

Substrate contacts are provided by residues R77 and Y205–G207. K214 and H234 together coordinate Mn(2+). S256 contacts substrate. Position 257–262 (A257–N262) interacts with GTP. C258 is a catalytic residue. D283 is a binding site for Mn(2+). The disordered stretch occupies residues K362–P388. N373–R375 provides a ligand contact to substrate. GTP is bound by residues R375, R406, and Y499–N502.

It belongs to the phosphoenolpyruvate carboxykinase [GTP] family. Monomer. It depends on Mn(2+) as a cofactor.

The protein resides in the cytoplasm. It catalyses the reaction oxaloacetate + GTP = phosphoenolpyruvate + GDP + CO2. Its pathway is carbohydrate biosynthesis; gluconeogenesis. In terms of biological role, catalyzes the conversion of oxaloacetate (OAA) to phosphoenolpyruvate (PEP), the rate-limiting step in the metabolic pathway that produces glucose from lactate and other precursors derived from the citric acid cycle. This is Phosphoenolpyruvate carboxykinase [GTP] from Anaeromyxobacter dehalogenans (strain 2CP-1 / ATCC BAA-258).